Consider the following 222-residue polypeptide: Protein GrpE (222 aa).

The interval 1–64 (MSDQNLGQGS…GEEILSDDDL (64 aa)) is disordered. Positions 16-44 (EEPIVRDKRRIDPETGKVREPQDLSHEEL) are enriched in basic and acidic residues. Residues 54–64 (QGEEILSDDDL) show a composition bias toward acidic residues.

Belongs to the GrpE family. In terms of assembly, homodimer.

Its subcellular location is the cytoplasm. Functionally, participates actively in the response to hyperosmotic and heat shock by preventing the aggregation of stress-denatured proteins, in association with DnaK and GrpE. It is the nucleotide exchange factor for DnaK and may function as a thermosensor. Unfolded proteins bind initially to DnaJ; upon interaction with the DnaJ-bound protein, DnaK hydrolyzes its bound ATP, resulting in the formation of a stable complex. GrpE releases ADP from DnaK; ATP binding to DnaK triggers the release of the substrate protein, thus completing the reaction cycle. Several rounds of ATP-dependent interactions between DnaJ, DnaK and GrpE are required for fully efficient folding. This is Protein GrpE from Leifsonia xyli subsp. xyli (strain CTCB07).